A 500-amino-acid chain; its full sequence is Glycerol kinase (500 aa).

T13 is a binding site for ADP. 3 residues coordinate ATP: T13, T14, and S15. T13 lines the sn-glycerol 3-phosphate pocket. R17 serves as a coordination point for ADP. Residues R83, E84, Y135, and D245 each contribute to the sn-glycerol 3-phosphate site. R83, E84, Y135, D245, and Q246 together coordinate glycerol. T267 and G310 together coordinate ADP. The ATP site is built by T267, G310, Q314, and G411. Positions 411 and 415 each coordinate ADP.

It belongs to the FGGY kinase family. Homotetramer and homodimer (in equilibrium).

The enzyme catalyses glycerol + ATP = sn-glycerol 3-phosphate + ADP + H(+). It participates in polyol metabolism; glycerol degradation via glycerol kinase pathway; sn-glycerol 3-phosphate from glycerol: step 1/1. Activated by phosphorylation and inhibited by fructose 1,6-bisphosphate (FBP). Key enzyme in the regulation of glycerol uptake and metabolism. Catalyzes the phosphorylation of glycerol to yield sn-glycerol 3-phosphate. The protein is Glycerol kinase of Lactobacillus acidophilus (strain ATCC 700396 / NCK56 / N2 / NCFM).